Here is a 168-residue protein sequence, read N- to C-terminus: HTH-type transcriptional regulator IscR (168 aa).

In terms of domain architecture, HTH rrf2-type spans 2–131; the sequence is KLTSKGRYAV…DGISLGELMV (130 aa). Positions 28–51 form a DNA-binding region, H-T-H motif; the sequence is LADISERQGISLSYLEQLFSKLRK. [2Fe-2S] cluster contacts are provided by cysteine 92, cysteine 98, and cysteine 104.

[2Fe-2S] cluster is required as a cofactor.

Its function is as follows. Regulates the transcription of several operons and genes involved in the biogenesis of Fe-S clusters and Fe-S-containing proteins. The chain is HTH-type transcriptional regulator IscR from Aliivibrio salmonicida (strain LFI1238) (Vibrio salmonicida (strain LFI1238)).